Reading from the N-terminus, the 651-residue chain is Chaperone protein dnaK1 (651 aa).

Threonine 197 carries the post-translational modification Phosphothreonine; by autocatalysis.

The protein belongs to the heat shock protein 70 family.

In terms of biological role, acts as a chaperone. The protein is Chaperone protein dnaK1 (dnaK1) of Thermosynechococcus vestitus (strain NIES-2133 / IAM M-273 / BP-1).